A 350-amino-acid polypeptide reads, in one-letter code: GDSL esterase/lipase At2g04570 (350 aa).

An N-terminal signal peptide occupies residues 1–23 (MGHLKSLFTILFLIAMSSTVTFA). Ser-35 functions as the Nucleophile in the catalytic mechanism. 2 N-linked (GlcNAc...) asparagine glycosylation sites follow: Asn-98 and Asn-117. Active-site residues include Asp-325 and His-328. The N-linked (GlcNAc...) asparagine glycan is linked to Asn-343.

This sequence belongs to the 'GDSL' lipolytic enzyme family.

It is found in the secreted. The chain is GDSL esterase/lipase At2g04570 from Arabidopsis thaliana (Mouse-ear cress).